A 539-amino-acid chain; its full sequence is Chaperonin GroEL 1 (539 aa).

ATP-binding positions include 29–32 (TLGP), 86–90 (DGTTT), glycine 413, 478–480 (NAA), and aspartate 494.

This sequence belongs to the chaperonin (HSP60) family. As to quaternary structure, forms a cylinder of 14 subunits composed of two heptameric rings stacked back-to-back. Interacts with the co-chaperonin GroES.

It is found in the cytoplasm. The enzyme catalyses ATP + H2O + a folded polypeptide = ADP + phosphate + an unfolded polypeptide.. Its function is as follows. Together with its co-chaperonin GroES, plays an essential role in assisting protein folding. The GroEL-GroES system forms a nano-cage that allows encapsulation of the non-native substrate proteins and provides a physical environment optimized to promote and accelerate protein folding. The chain is Chaperonin GroEL 1 from Corynebacterium diphtheriae (strain ATCC 700971 / NCTC 13129 / Biotype gravis).